The sequence spans 230 residues: Sugar fermentation stimulation protein homolog (230 aa).

It belongs to the SfsA family.

The chain is Sugar fermentation stimulation protein homolog from Ruegeria pomeroyi (strain ATCC 700808 / DSM 15171 / DSS-3) (Silicibacter pomeroyi).